A 2134-amino-acid polypeptide reads, in one-letter code: Genome polyprotein (2134 aa).

The Cytoplasmic portion of the chain corresponds to 1–1377; it reads MSKLFSTVGR…WLFEKIKTSK (1377 aa). Residues 781 to 882 enclose the LRAT domain; it reads IVICSGEKAK…GDYGTKEGEK (102 aa). Catalysis depends on residues H791 and H802. Catalysis depends on C863, which acts as the Acyl-thioester intermediate. Residues 1127–1289 enclose the SF3 helicase domain; the sequence is LNKLGRLDKP…EEFSTHAMLD (163 aa). Residue 1153–1160 participates in ATP binding; the sequence is GNRGGGKS. The stretch at 1378-1392 is an intramembrane region; it reads WYILGCVGAALSVSV. At 1393–2134 the chain is on the cytoplasmic side; sequence LGVFAYHMIK…VKDRVIDDSF (742 aa). Y1415 carries the O-(5'-phospho-RNA)-tyrosine modification. The 213-residue stretch at 1431–1643 folds into the Peptidase C3 domain; that stretch reads DAQSVVDISN…ITKEMIEEML (213 aa). Catalysis depends on for protease 3C activity residues H1477, D1515, and C1603. One can recognise a RdRp catalytic domain in the interval 1880–2001; that stretch reads DLVVGLDFSN…CIKKESLDQK (122 aa).

It belongs to the picornaviridae polyprotein family. Specific enzymatic cleavages by the viral protease in vivo yield a variety of precursors and mature proteins. During virion maturation, non-infectious particles are rendered infectious following cleavage of VP0. This maturation cleavage is followed by a conformational change of the particle. In terms of processing, VPg is uridylylated by the polymerase and is covalently linked to the 5'-end of genomic RNA. This uridylylated form acts as a nucleotide-peptide primer for the polymerase.

The protein resides in the virion. Its subcellular location is the host cytoplasm. The protein localises to the host cytoplasmic vesicle membrane. It carries out the reaction RNA(n) + a ribonucleoside 5'-triphosphate = RNA(n+1) + diphosphate. The enzyme catalyses a ribonucleoside 5'-triphosphate + H2O = a ribonucleoside 5'-diphosphate + phosphate + H(+). It catalyses the reaction Selective cleavage of Gln-|-Gly bond in the poliovirus polyprotein. In other picornavirus reactions Glu may be substituted for Gln, and Ser or Thr for Gly.. Functionally, capsid proteins VP1, VP2, and VP3 form a closed capsid enclosing the viral positive strand RNA genome. All these proteins contain a beta-sheet structure called beta-barrel jelly roll. Together they form an icosahedral capsid (T=3) composed of 60 copies of each VP1, VP2, and VP3, with a diameter of approximately 300 Angstroms. VP1 is situated at the 12 fivefold axes, whereas VP2 and VP3 are located at the quasi-sixfold axes. Its function is as follows. VP0 precursor is a component of immature procapsids. The N-terminal domain of VP0, protein VP4, is needed for the assembly of 12 pentamers into the icosahedral structure. Unlike other picornaviruses, AEV VP4 may not be myristoylated. Protein 2B and 2BC precursor affect membrane integrity and cause an increase in membrane permeability. In terms of biological role, associates with and induces structural rearrangements of intracellular membranes. It displays RNA-binding, nucleotide binding and NTPase activities. Functionally, protein 3A, via its hydrophobic domain, serves as membrane anchor. Its function is as follows. Protein 3B is covalently linked to the 5'-end of both the positive-strand and negative-strand genomic RNAs. It acts as a genome-linked replication primer. Cysteine protease that generates mature viral proteins from the precursor polyprotein. In addition to its proteolytic activity, it binds to viral RNA, and thus influences viral genome replication. RNA and substrate bind cooperatively to the protease. In terms of biological role, RNA-directed RNA polymerase 3D-POL replicates genomic and antigenomic RNA by recognizing replications specific signals. In Avian encephalomyelitis virus (strain L2Z) (AEV), this protein is Genome polyprotein.